A 747-amino-acid polypeptide reads, in one-letter code: NAD-dependent protein deacetylase sirtuin-1 (747 aa).

Residues 1-135 (MADEAALALQ…DDEGEEEEEA (135 aa)) are disordered. Ala2 bears the N-acetylalanine mark. The tract at residues 2-139 (ADEAALALQP…EEEEEAAAAA (138 aa)) is interaction with CLOCK. The segment at 2–268 (ADEAALALQP…LTGAGVSVSC (267 aa)) is interaction with H1-4. Residues Ser14 and Ser26 each carry the phosphoserine modification. Ser27 carries the post-translational modification Phosphoserine; by MAPK8. Positions 32–39 (PLRKRPRR) match the Nuclear localization signal motif. At Ser47 the chain carries Phosphoserine; by MAPK8. The span at 61–100 (PAAARGCPGAAAAALWREAEAEAAAAGGEQEAQATAAAGE) shows a compositional bias: low complexity. The span at 120-135 (LYDEDDDDEGEEEEEA) shows a compositional bias: acidic residues. The Nuclear export signal signature appears at 138–145 (AAIGYRDN). The interaction with CCAR2 stretch occupies residues 143–541 (RDNLLFGDEI…LHVSEDSSSP (399 aa)). Phosphoserine occurs at positions 159, 162, 172, and 173. The Nuclear localization signal signature appears at 223–230 (IVINILSE). One can recognise a Deacetylase sirtuin-type domain in the interval 236-496 (KRKDINTIED…NELCHRLGGE (261 aa)). N6-acetyllysine is present on Lys238. Residues 256–259 (IIVL) form a required for interaction with the sumoylated form of CCAR2 region. NAD(+) is bound by residues 261–280 (GAGV…DGIY) and 345–348 (QNID). The active-site Proton acceptor is His363. Zn(2+) contacts are provided by Cys371 and Cys374. The residue at position 377 (Lys377) is an N6-acetyllysine. Zn(2+) contacts are provided by Cys395 and Cys398. S-nitrosocysteine occurs at positions 395 and 398. The short motif at 425–431 (AMKYDKD) is the Nuclear export signal element. Lys430 carries the post-translational modification N6-acetyllysine. NAD(+) is bound by residues 440–442 (GSS), 465–467 (NRE), and Cys482. Residue Lys513 is modified to N6-acetyllysine. Disordered regions lie at residues 523–549 (YLSE…PPDS) and 562–587 (SNDD…TSRN). At Thr530 the chain carries Phosphothreonine; by DYRK1A, DYRK3 and MAPK8. Ser535 is modified (phosphoserine). Residues 537-549 (DSSSPERTSPPDS) show a composition bias toward polar residues. The phosphorylated at one of three serine residues stretch occupies residues 538–540 (SSS). The residue at position 544 (Thr544) is a Phosphothreonine. Ser545 is modified (phosphoserine). Residues 569 to 580 (SESKGCMEEKPQ) show a composition bias toward basic and acidic residues. Lys610 carries the post-translational modification N6-acetyllysine. 2 positions are modified to phosphoserine; by CaMK2: Ser659 and Ser661. The interval 663–726 (DDVLSSSSCG…FGTDGDDQEA (64 aa)) is disordered. Positions 666–677 (LSSSSCGSNSDS) are enriched in low complexity. The span at 687 to 707 (EPMEDESEIEEFYNGLEDEPD) shows a compositional bias: acidic residues. Residue Thr719 is modified to Phosphothreonine. At Ser747 the chain carries Phosphoserine.

It belongs to the sirtuin family. Class I subfamily. As to quaternary structure, interacts with XBP1 isoform 2. Found in a complex with PCAF and MYOD1. Interacts with FOXO1; the interaction deacetylates FOXO1, resulting in its nuclear retention and promotion of its transcriptional activity Component of the eNoSC complex, composed of SIRT1, SUV39H1 and RRP8. Interacts with HES1, HEY2 and PML. Interacts with RPS19BP1/AROS. Interacts with CCAR2 (via N-terminus); the interaction disrupts the interaction between SIRT1 and p53/TP53. Interacts with SETD7; the interaction induces the dissociation of SIRT1 from p53/TP53 and increases p53/TP53 activity. Interacts with MYCN, NR1I2, CREBZF, TSC2, TLE1, FOS, JUN, NR0B2, PPARG, NCOR, IRS1, IRS2 and NMNAT1. Interacts with HNF1A; the interaction occurs under nutrient restriction. Interacts with SUZ12; the interaction mediates the association with the PRC4 histone methylation complex which is specific as an association with PCR2 and PCR3 complex variants is not found. Interacts with BCL6; leads to a epigenetic repression of specific target genes. Interacts with CLOCK, BMAL1 and PER2. Interacts with PPARA; the interaction seems to be modulated by NAD(+) levels. Interacts with NR1H3 and this interaction is inhibited in the presence of CCAR2. Interacts with CHEK2. Interacts with p53/TP53. Exhibits a preferential interaction with sumoylated CCAR2 over its unmodified form. Interacts with PACS2. Interacts with SIRT7. Interacts with PUS7. Interacts with TULP3. Interacts with MORN3; the interaction enhances the ubiquitination of p53/TP53. (Microbial infection) Interacts with HIV-1 Tat. The cofactor is Zn(2+). Post-translationally, methylated on multiple lysine residues; methylation is enhanced after DNA damage and is dispensable for deacetylase activity toward p53/TP53. In terms of processing, phosphorylated. Phosphorylated by STK4/MST1, resulting in inhibition of SIRT1-mediated p53/TP53 deacetylation. Phosphorylation by MAPK8/JNK1 at Ser-27, Ser-47, and Thr-530 leads to increased nuclear localization and enzymatic activity. Phosphorylation at Thr-530 by DYRK1A and DYRK3 activates deacetylase activity and promotes cell survival. Phosphorylation by mammalian target of rapamycin complex 1 (mTORC1) at Ser-47 inhibits deacetylation activity. Phosphorylated by CaMK2, leading to increased p53/TP53 and NF-kappa-B p65/RELA deacetylation activity. Phosphorylation at Ser-27 implicating MAPK9 is linked to protein stability. There is some ambiguity for some phosphosites: Ser-159/Ser-162 and Thr-544/Ser-545. Proteolytically cleaved by cathepsin B upon TNF-alpha treatment to yield catalytic inactive but stable SirtT1 75 kDa fragment (75SirT1). Post-translationally, S-nitrosylated by GAPDH, leading to inhibit the NAD-dependent protein deacetylase activity. In terms of processing, acetylated at various Lys residues. Deacetylated via an autocatalytic mechanism. Autodeacetylation at Lys-238 promotes its protein deacetylase activity. Ubiquitinated; leading to degradation. Deubiquitinated by USP22; leading to stabilization. Widely expressed.

It is found in the nucleus. It localises to the PML body. The protein resides in the cytoplasm. Its subcellular location is the mitochondrion. The enzyme catalyses N(6)-acetyl-L-lysyl-[protein] + NAD(+) + H2O = 2''-O-acetyl-ADP-D-ribose + nicotinamide + L-lysyl-[protein]. The catalysed reaction is N(6)-propanoyl-L-lysyl-[protein] + NAD(+) + H2O = 3''-O-propanoyl-ADP-D-ribose + nicotinamide + L-lysyl-[protein]. It catalyses the reaction N(6)-(2E)-butenoyl-L-lysyl-[protein] + NAD(+) + H2O = 2''-O-(2E)-but-2-enoyl-ADP-D-ribose + nicotinamide + L-lysyl-[protein]. It carries out the reaction N(6)-[(S)-lactoyl]-L-lysyl-[protein] + NAD(+) + H2O = 2''-O-(S)-lactoyl-ADP-D-ribose + nicotinamide + L-lysyl-[protein]. With respect to regulation, inhibited by nicotinamide. Activated by resveratrol (3,5,4'-trihydroxy-trans-stilbene), butein (3,4,2',4'-tetrahydroxychalcone), piceatannol (3,5,3',4'-tetrahydroxy-trans-stilbene), Isoliquiritigenin (4,2',4'-trihydroxychalcone), fisetin (3,7,3',4'-tetrahydroxyflavone) and quercetin (3,5,7,3',4'-pentahydroxyflavone). MAPK8/JNK1 and RPS19BP1/AROS act as positive regulators of deacetylation activity. Negatively regulated by CCAR2. Its function is as follows. NAD-dependent protein deacetylase that links transcriptional regulation directly to intracellular energetics and participates in the coordination of several separated cellular functions such as cell cycle, response to DNA damage, metabolism, apoptosis and autophagy. Can modulate chromatin function through deacetylation of histones and can promote alterations in the methylation of histones and DNA, leading to transcriptional repression. Deacetylates a broad range of transcription factors and coregulators, thereby regulating target gene expression positively and negatively. Serves as a sensor of the cytosolic ratio of NAD(+)/NADH which is altered by glucose deprivation and metabolic changes associated with caloric restriction. Is essential in skeletal muscle cell differentiation and in response to low nutrients mediates the inhibitory effect on skeletal myoblast differentiation which also involves 5'-AMP-activated protein kinase (AMPK) and nicotinamide phosphoribosyltransferase (NAMPT). Component of the eNoSC (energy-dependent nucleolar silencing) complex, a complex that mediates silencing of rDNA in response to intracellular energy status and acts by recruiting histone-modifying enzymes. The eNoSC complex is able to sense the energy status of cell: upon glucose starvation, elevation of NAD(+)/NADP(+) ratio activates SIRT1, leading to histone H3 deacetylation followed by dimethylation of H3 at 'Lys-9' (H3K9me2) by SUV39H1 and the formation of silent chromatin in the rDNA locus. Deacetylates 'Lys-266' of SUV39H1, leading to its activation. Inhibits skeletal muscle differentiation by deacetylating PCAF and MYOD1. Deacetylates H2A and 'Lys-26' of H1-4. Deacetylates 'Lys-16' of histone H4 (in vitro). Involved in NR0B2/SHP corepression function through chromatin remodeling: Recruited to LRH1 target gene promoters by NR0B2/SHP thereby stimulating histone H3 and H4 deacetylation leading to transcriptional repression. Proposed to contribute to genomic integrity via positive regulation of telomere length; however, reports on localization to pericentromeric heterochromatin are conflicting. Proposed to play a role in constitutive heterochromatin (CH) formation and/or maintenance through regulation of the available pool of nuclear SUV39H1. Upon oxidative/metabolic stress decreases SUV39H1 degradation by inhibiting SUV39H1 polyubiquitination by MDM2. This increase in SUV39H1 levels enhances SUV39H1 turnover in CH, which in turn seems to accelerate renewal of the heterochromatin which correlates with greater genomic integrity during stress response. Deacetylates 'Lys-382' of p53/TP53 and impairs its ability to induce transcription-dependent proapoptotic program and modulate cell senescence. Deacetylates TAF1B and thereby represses rDNA transcription by the RNA polymerase I. Deacetylates MYC, promotes the association of MYC with MAX and decreases MYC stability leading to compromised transformational capability. Deacetylates FOXO3 in response to oxidative stress thereby increasing its ability to induce cell cycle arrest and resistance to oxidative stress but inhibiting FOXO3-mediated induction of apoptosis transcriptional activity; also leading to FOXO3 ubiquitination and protesomal degradation. Appears to have a similar effect on MLLT7/FOXO4 in regulation of transcriptional activity and apoptosis. Deacetylates DNMT1; thereby impairs DNMT1 methyltransferase-independent transcription repressor activity, modulates DNMT1 cell cycle regulatory function and DNMT1-mediated gene silencing. Deacetylates RELA/NF-kappa-B p65 thereby inhibiting its transactivating potential and augments apoptosis in response to TNF-alpha. Deacetylates HIF1A, KAT5/TIP60, RB1 and HIC1. Deacetylates FOXO1 resulting in its nuclear retention and enhancement of its transcriptional activity leading to increased gluconeogenesis in liver. Inhibits E2F1 transcriptional activity and apoptotic function, possibly by deacetylation. Involved in HES1- and HEY2-mediated transcriptional repression. In cooperation with MYCN seems to be involved in transcriptional repression of DUSP6/MAPK3 leading to MYCN stabilization by phosphorylation at 'Ser-62'. Deacetylates MEF2D. Required for antagonist-mediated transcription suppression of AR-dependent genes which may be linked to local deacetylation of histone H3. Represses HNF1A-mediated transcription. Required for the repression of ESRRG by CREBZF. Deacetylates NR1H3 and NR1H2 and deacetylation of NR1H3 at 'Lys-434' positively regulates transcription of NR1H3:RXR target genes, promotes NR1H3 proteasomal degradation and results in cholesterol efflux; a promoter clearing mechanism after reach round of transcription is proposed. Involved in lipid metabolism: deacetylates LPIN1, thereby inhibiting diacylglycerol synthesis. Implicated in regulation of adipogenesis and fat mobilization in white adipocytes by repression of PPARG which probably involves association with NCOR1 and SMRT/NCOR2. Deacetylates p300/EP300 and PRMT1. Deacetylates ACSS2 leading to its activation, and HMGCS1 deacetylation. Involved in liver and muscle metabolism. Through deacetylation and activation of PPARGC1A is required to activate fatty acid oxidation in skeletal muscle under low-glucose conditions and is involved in glucose homeostasis. Involved in regulation of PPARA and fatty acid beta-oxidation in liver. Involved in positive regulation of insulin secretion in pancreatic beta cells in response to glucose; the function seems to imply transcriptional repression of UCP2. Proposed to deacetylate IRS2 thereby facilitating its insulin-induced tyrosine phosphorylation. Deacetylates SREBF1 isoform SREBP-1C thereby decreasing its stability and transactivation in lipogenic gene expression. Involved in DNA damage response by repressing genes which are involved in DNA repair, such as XPC and TP73, deacetylating XRCC6/Ku70, and facilitating recruitment of additional factors to sites of damaged DNA, such as SIRT1-deacetylated NBN can recruit ATM to initiate DNA repair and SIRT1-deacetylated XPA interacts with RPA2. Also involved in DNA repair of DNA double-strand breaks by homologous recombination and specifically single-strand annealing independently of XRCC6/Ku70 and NBN. Promotes DNA double-strand breaks by mediating deacetylation of SIRT6. Transcriptional suppression of XPC probably involves an E2F4:RBL2 suppressor complex and protein kinase B (AKT) signaling. Transcriptional suppression of TP73 probably involves E2F4 and PCAF. Deacetylates WRN thereby regulating its helicase and exonuclease activities and regulates WRN nuclear translocation in response to DNA damage. Deacetylates APEX1 at 'Lys-6' and 'Lys-7' and stimulates cellular AP endonuclease activity by promoting the association of APEX1 to XRCC1. Catalyzes deacetylation of ERCC4/XPF, thereby impairing interaction with ERCC1 and nucleotide excision repair (NER). Increases p53/TP53-mediated transcription-independent apoptosis by blocking nuclear translocation of cytoplasmic p53/TP53 and probably redirecting it to mitochondria. Deacetylates XRCC6/Ku70 at 'Lys-539' and 'Lys-542' causing it to sequester BAX away from mitochondria thereby inhibiting stress-induced apoptosis. Is involved in autophagy, presumably by deacetylating ATG5, ATG7 and MAP1LC3B/ATG8. Deacetylates AKT1 which leads to enhanced binding of AKT1 and PDK1 to PIP3 and promotes their activation. Proposed to play role in regulation of STK11/LBK1-dependent AMPK signaling pathways implicated in cellular senescence which seems to involve the regulation of the acetylation status of STK11/LBK1. Can deacetylate STK11/LBK1 and thereby increase its activity, cytoplasmic localization and association with STRAD; however, the relevance of such activity in normal cells is unclear. In endothelial cells is shown to inhibit STK11/LBK1 activity and to promote its degradation. Deacetylates SMAD7 at 'Lys-64' and 'Lys-70' thereby promoting its degradation. Deacetylates CIITA and augments its MHC class II transactivation and contributes to its stability. Deacetylates MECOM/EVI1. Deacetylates PML at 'Lys-487' and this deacetylation promotes PML control of PER2 nuclear localization. During the neurogenic transition, represses selective NOTCH1-target genes through histone deacetylation in a BCL6-dependent manner and leading to neuronal differentiation. Regulates the circadian expression of several core clock genes, including BMAL1, RORC, PER2 and CRY1 and plays a critical role in maintaining a controlled rhythmicity in histone acetylation, thereby contributing to circadian chromatin remodeling. Deacetylates BMAL1 and histones at the circadian gene promoters in order to facilitate repression by inhibitory components of the circadian oscillator. Deacetylates PER2, facilitating its ubiquitination and degradation by the proteasome. Protects cardiomyocytes against palmitate-induced apoptosis. Deacetylates XBP1 isoform 2; deacetylation decreases protein stability of XBP1 isoform 2 and inhibits its transcriptional activity. Deacetylates PCK1 and directs its activity toward phosphoenolpyruvate production promoting gluconeogenesis. Involved in the CCAR2-mediated regulation of PCK1 and NR1D1. Deacetylates CTNB1 at 'Lys-49'. In POMC (pro-opiomelanocortin) neurons, required for leptin-induced activation of PI3K signaling. Deacetylates SOX9; promoting SOX9 nuclear localization and transactivation activity. Involved in the regulation of centrosome duplication: deacetylates CENATAC in G1 phase, allowing for SASS6 accumulation on the centrosome and subsequent procentriole assembly. Deacetylates NDC80/HEC1. In addition to protein deacetylase activity, also acts as a protein-lysine deacylase by mediating protein delactylation, depropionylation and decrotonylation. Mediates depropionylation of Osterix (SP7). Catalyzes decrotonylation of histones; it however does not represent a major histone decrotonylase. Mediates protein delactylation of TEAD1 and YAP1. Deacetylates 'Lys-382' of p53/TP53, however with lower activity than isoform 1. In combination, the two isoforms exert an additive effect. Isoform 2 regulates p53/TP53 expression and cellular stress response and is in turn repressed by p53/TP53 presenting a SIRT1 isoform-dependent auto-regulatory loop. Functionally, catalytically inactive 75SirT1 may be involved in regulation of apoptosis. May be involved in protecting chondrocytes from apoptotic death by associating with cytochrome C and interfering with apoptosome assembly. In terms of biological role, (Microbial infection) In case of HIV-1 infection, interacts with and deacetylates the viral Tat protein. The viral Tat protein inhibits SIRT1 deacetylation activity toward RELA/NF-kappa-B p65, thereby potentiates its transcriptional activity and SIRT1 is proposed to contribute to T-cell hyperactivation during infection. The chain is NAD-dependent protein deacetylase sirtuin-1 from Homo sapiens (Human).